We begin with the raw amino-acid sequence, 179 residues long: ATP-dependent protease subunit HslV (179 aa).

Thr5 is a catalytic residue. Na(+)-binding residues include Cys164 and Thr167.

It belongs to the peptidase T1B family. HslV subfamily. In terms of assembly, a double ring-shaped homohexamer of HslV is capped on each side by a ring-shaped HslU homohexamer. The assembly of the HslU/HslV complex is dependent on binding of ATP.

It localises to the cytoplasm. The catalysed reaction is ATP-dependent cleavage of peptide bonds with broad specificity.. With respect to regulation, allosterically activated by HslU binding. Functionally, protease subunit of a proteasome-like degradation complex believed to be a general protein degrading machinery. The sequence is that of ATP-dependent protease subunit HslV from Carboxydothermus hydrogenoformans (strain ATCC BAA-161 / DSM 6008 / Z-2901).